The primary structure comprises 79 residues: MSAVAGCTATTDPGWEVDAFGGVSSLCQPMEADLYGCSDPCWWPAQVPDMMSTYQDWNAQASNSAEDWRNLGTVFPKDK.

Positions 7–16 form a cross-link, 4-cysteinyl-glutamic acid (Cys-Glu); sequence CTATTDPGWE. 2 cross-links (3-cysteinyl-aspartic acid (Cys-Asp)) span residues 27–33 and 41–49; these read CQPMEAD and CWWPAQVPD. D33 serves as the catalytic Proton acceptor. The segment at residues 37 to 43 is a cross-link (4'-cysteinyl-tryptophylquinone (Cys-Trp)); the sequence is CSDPCWW. W43 bears the Tryptophylquinone mark.

Belongs to the quinohemoprotein amine dehydrogenase subunit gamma family. Heterotrimer of an alpha, a beta and a gamma subunit. The cofactor is cysteine tryptophylquinone residue. Post-translationally, the cysteine tryptophylquinone (CTQ) is generated by oxidation of the indole ring of a tryptophan residue to form tryptophylquinone, followed by covalent cross-linking with a cysteine residue.

The protein localises to the periplasm. The catalysed reaction is an aliphatic amine + A + H2O = an aldehyde + AH2 + NH4(+). Its function is as follows. Catalyzes the oxidative deamination of a wide range of aliphatic monoamines and diamines. The physiological electron acceptor is an azurin-like blue protein. This Pseudomonas putida (strain ATCC 47054 / DSM 6125 / CFBP 8728 / NCIMB 11950 / KT2440) protein is Quinohemoprotein amine dehydrogenase subunit gamma (qhnDH).